The primary structure comprises 351 residues: MAKIAVFFGGSSTEHSISIRTGCFICRTLHTMGHSVKPILLTQDGGWVVPLQYRISIPYEAVNSSDLFEEEFQKTNGVSKMDFISNLDADIVFLGLHGGKGEDGSIQGFLRVLGVPYTGSGVAASALAMDKTRANQIFLQSGQKVAPFFEVEKLGYTNSPEETVIKLMSLGFPQFLKPVEGGSSVSTYKITNQEQLSRQLALIFESDSKVMSQSFLAGTEVSCGVLERYRNGKLERIALPATEIVPGGEFFDFESKYKQGGSREITPARISKQEMTRVQELAIDAHTSLGCRGYSRSDFIIVGGEPHILETNTLPGMTETSLIPQQAKAAGITMEEVFADLIEIGLKHSIH.

An ATP-grasp domain is found at 135-343; the sequence is NQIFLQSGQK…MEEVFADLIE (209 aa). 167-222 contributes to the ATP binding site; that stretch reads LMSLGFPQFLKPVEGGSSVSTYKITNQEQLSRQLALIFESDSKVMSQSFLAGTEVS. Residues D298, E310, and N312 each contribute to the Mg(2+) site.

Belongs to the D-alanine--D-alanine ligase family. The cofactor is Mg(2+). Mn(2+) serves as cofactor.

It is found in the cytoplasm. The catalysed reaction is 2 D-alanine + ATP = D-alanyl-D-alanine + ADP + phosphate + H(+). The protein operates within cell wall biogenesis; peptidoglycan biosynthesis. Cell wall formation. In Leptospira borgpetersenii serovar Hardjo-bovis (strain JB197), this protein is D-alanine--D-alanine ligase.